The primary structure comprises 380 residues: All-trans-retinol dehydrogenase [NAD(+)] ADH4 (380 aa).

Residue Cys47 participates in Zn(2+) binding. An NAD(+)-binding site is contributed by 48-49; it reads HT. His69, Cys99, Cys102, Cys105, and Cys113 together coordinate Zn(2+). Ser121 is subject to Phosphoserine. Cys180 is a binding site for Zn(2+). NAD(+)-binding positions include 205-210, Asp229, and Lys234; that span reads GLGGVG. Ser278 carries the phosphoserine modification. Residues 298 to 300, 323 to 325, and Arg375 each bind NAD(+); these read IGV and TFF.

It belongs to the zinc-containing alcohol dehydrogenase family. Class-II subfamily. In terms of assembly, homodimer. Zn(2+) serves as cofactor.

Its subcellular location is the cytoplasm. It catalyses the reaction all-trans-retinol + NAD(+) = all-trans-retinal + NADH + H(+). The enzyme catalyses 9-cis-retinol + NAD(+) = 9-cis-retinal + NADH + H(+). It carries out the reaction 20-oxo-(5Z,8Z,11Z,14Z)-eicosatetraenoate + NAD(+) + H2O = (5Z,8Z,11Z,14Z)-eicosatetraenedioate + NADH + 2 H(+). The catalysed reaction is 20-hydroxy-(5Z,8Z,11Z,14Z)-eicosatetraenoate + NAD(+) = 20-oxo-(5Z,8Z,11Z,14Z)-eicosatetraenoate + NADH + H(+). It catalyses the reaction 1,4-benzoquinone + NADH + H(+) = hydroquinone + NAD(+). Oxydation of 20-HETE is inhibited by low concentrations of N-heptylformamide. Oxydation of 20-HETE is a decreased by 55-65% by either all-trans-retinol or all-trans-retinoic acid. Strongly inhibited by omega-hydroxy fatty acids. Functionally, catalyzes the NAD-dependent oxidation of either all-trans-retinol or 9-cis-retinol. Also oxidizes long chain omega-hydroxy fatty acids, such as 20-HETE, producing both the intermediate aldehyde, 20-oxoarachidonate and the end product, a dicarboxylic acid, (5Z,8Z,11Z,14Z)-eicosatetraenedioate. Also catalyzes the reduction of benzoquinones. The polypeptide is All-trans-retinol dehydrogenase [NAD(+)] ADH4 (Homo sapiens (Human)).